Here is a 130-residue protein sequence, read N- to C-terminus: MAQVEYKGTGRRKNSVARVRLVPGEGNITVNERDVRDYLPFESLILDLNQPFDVTETKGNYDVLVNVHGGGFTGQAQAIRHGIARALLEADPEYRGSLKRAGLLTRDPRMKERKKPGLKKARRSPQFSKR.

A disordered region spans residues 98–130 (LKRAGLLTRDPRMKERKKPGLKKARRSPQFSKR). Basic residues predominate over residues 111–130 (KERKKPGLKKARRSPQFSKR).

Belongs to the universal ribosomal protein uS9 family.

The polypeptide is Small ribosomal subunit protein uS9 (Staphylococcus epidermidis (strain ATCC 35984 / DSM 28319 / BCRC 17069 / CCUG 31568 / BM 3577 / RP62A)).